Reading from the N-terminus, the 317-residue chain is Putative carboxypeptidase RP402 (317 aa).

The Nucleophile role is filled by serine 125. Active-site charge relay system residues include glutamate 225 and histidine 288.

Belongs to the peptidase S66 family.

The polypeptide is Putative carboxypeptidase RP402 (Rickettsia prowazekii (strain Madrid E)).